The following is a 545-amino-acid chain: CTP synthase (545 aa).

The amidoligase domain stretch occupies residues 1–266; it reads MTTRYIFVTG…DDLVIKRFNL (266 aa). Position 14 (S14) interacts with CTP. A UTP-binding site is contributed by S14. Residues 15–20 and D72 each bind ATP; that span reads SLGKGI. Residues D72 and E140 each coordinate Mg(2+). CTP is bound by residues 147 to 149, 187 to 192, and K223; these read DIE and KTKPTQ. UTP is bound by residues 187 to 192 and K223; that span reads KTKPTQ. 239–241 is a binding site for ATP; that stretch reads KDV. A Glutamine amidotransferase type-1 domain is found at 291 to 542; the sequence is TIGMVGKYIE…IAASYAYQKR (252 aa). Position 352 (G352) interacts with L-glutamine. Residue C379 is the Nucleophile; for glutamine hydrolysis of the active site. L-glutamine is bound by residues 380 to 383, E403, and R470; that span reads LGMQ. Active-site residues include H515 and E517.

This sequence belongs to the CTP synthase family. Homotetramer.

It catalyses the reaction UTP + L-glutamine + ATP + H2O = CTP + L-glutamate + ADP + phosphate + 2 H(+). The enzyme catalyses L-glutamine + H2O = L-glutamate + NH4(+). It carries out the reaction UTP + NH4(+) + ATP = CTP + ADP + phosphate + 2 H(+). It participates in pyrimidine metabolism; CTP biosynthesis via de novo pathway; CTP from UDP: step 2/2. With respect to regulation, allosterically activated by GTP, when glutamine is the substrate; GTP has no effect on the reaction when ammonia is the substrate. The allosteric effector GTP functions by stabilizing the protein conformation that binds the tetrahedral intermediate(s) formed during glutamine hydrolysis. Inhibited by the product CTP, via allosteric rather than competitive inhibition. In terms of biological role, catalyzes the ATP-dependent amination of UTP to CTP with either L-glutamine or ammonia as the source of nitrogen. Regulates intracellular CTP levels through interactions with the four ribonucleotide triphosphates. The polypeptide is CTP synthase (Shewanella frigidimarina (strain NCIMB 400)).